A 192-amino-acid polypeptide reads, in one-letter code: Potassium-transporting ATPase KdpC subunit (192 aa).

The helical transmembrane segment at 7 to 27 (PLIVIFAVLTAVTGLAYPAVM) threads the bilayer.

It belongs to the KdpC family. The system is composed of three essential subunits: KdpA, KdpB and KdpC.

Its subcellular location is the cell inner membrane. Functionally, part of the high-affinity ATP-driven potassium transport (or Kdp) system, which catalyzes the hydrolysis of ATP coupled with the electrogenic transport of potassium into the cytoplasm. This subunit acts as a catalytic chaperone that increases the ATP-binding affinity of the ATP-hydrolyzing subunit KdpB by the formation of a transient KdpB/KdpC/ATP ternary complex. This chain is Potassium-transporting ATPase KdpC subunit, found in Paraburkholderia phytofirmans (strain DSM 17436 / LMG 22146 / PsJN) (Burkholderia phytofirmans).